The chain runs to 427 residues: 3-isopropylmalate dehydratase large subunit (427 aa).

[4Fe-4S] cluster is bound by residues cysteine 308, cysteine 368, and cysteine 371.

This sequence belongs to the aconitase/IPM isomerase family. LeuC type 2 subfamily. In terms of assembly, heterodimer of LeuC and LeuD. Requires [4Fe-4S] cluster as cofactor.

It carries out the reaction (2R,3S)-3-isopropylmalate = (2S)-2-isopropylmalate. It participates in amino-acid biosynthesis; L-leucine biosynthesis; L-leucine from 3-methyl-2-oxobutanoate: step 2/4. In terms of biological role, catalyzes the isomerization between 2-isopropylmalate and 3-isopropylmalate, via the formation of 2-isopropylmaleate. This is 3-isopropylmalate dehydratase large subunit from Geobacter metallireducens (strain ATCC 53774 / DSM 7210 / GS-15).